The sequence spans 192 residues: Adenylate kinase (192 aa).

Position 12–17 (12–17 (GSGKTT)) interacts with ATP. The segment at 34–63 (STGDLLRAQVASGSELGKTIDSFISKGNLV) is NMP. AMP-binding positions include Thr35, Arg40, 61–63 (NLV), 88–91 (GYPR), and Gln95. Residues 130-136 (GRNRGAD) form an LID region. Residue Arg131 participates in ATP binding. 2 residues coordinate AMP: Arg133 and Arg145. Arg173 provides a ligand contact to ATP.

This sequence belongs to the adenylate kinase family. Monomer.

Its subcellular location is the cytoplasm. It catalyses the reaction AMP + ATP = 2 ADP. The protein operates within purine metabolism; AMP biosynthesis via salvage pathway; AMP from ADP: step 1/1. Functionally, catalyzes the reversible transfer of the terminal phosphate group between ATP and AMP. Plays an important role in cellular energy homeostasis and in adenine nucleotide metabolism. This chain is Adenylate kinase, found in Campylobacter jejuni subsp. doylei (strain ATCC BAA-1458 / RM4099 / 269.97).